Here is a 329-residue protein sequence, read N- to C-terminus: GTPase Obg (329 aa).

Residues 1-159 (MQFIDQACIS…WLLHLELKLL (159 aa)) enclose the Obg domain. An OBG-type G domain is found at 160–328 (AEVGIIGLPN…LLKNVWEKLE (169 aa)). ATP-binding positions include 166-173 (GLPNAGKS), 191-195 (FTTLI), 213-216 (DIPG), 280-283 (NKKE), and 309-311 (SAA). The Mg(2+) site is built by serine 173 and threonine 193.

It belongs to the TRAFAC class OBG-HflX-like GTPase superfamily. OBG GTPase family. In terms of assembly, monomer. It depends on Mg(2+) as a cofactor.

It localises to the cytoplasm. Functionally, an essential GTPase which binds GTP, GDP and possibly (p)ppGpp with moderate affinity, with high nucleotide exchange rates and a fairly low GTP hydrolysis rate. Plays a role in control of the cell cycle, stress response, ribosome biogenesis and in those bacteria that undergo differentiation, in morphogenesis control. The protein is GTPase Obg of Prochlorococcus marinus (strain MIT 9211).